A 118-amino-acid chain; its full sequence is Phage-like element PBSX protein XkdH (118 aa).

This sequence to B.subtilis YqbH.

In Bacillus subtilis (strain 168), this protein is Phage-like element PBSX protein XkdH (xkdH).